The chain runs to 690 residues: MHSLKRRRNHAPDWQDFYKNGVPQEVIVIEDSASPRLTPNLPPPFSVHQLQSFVPPQPPSSSSPSTTGTVAVPINGANAVYPSTNSVSLPQSYDPWLDANGVVPLPHDVASHPSYMVQSPTSYHACSNNQSPFPHSHHPPLHNPLPVSCQPVLRPPPVPQVPSHWYPVSLPSPNLPHQPISKPPVIPNLPKLQVHPNRLPHPIHNHPYSSPTSYPPPLCPATYCPSNPPQLAPATAIAPSSQSSQHKSVNYSVTPSSINNHTAVPLSPTLAVWLPMTQPTFQPPSANVYQPASNANQVITPVSISDYRPPKKRKRAAWPPYKKVDRVNVPVVHDTTAFDPSTFDDDDGHYKVVPNSKFANRYTVVRLLGHGTFGKVIQCYDQSTGRHCAIKVTRAIPKYREASLIELRVLQTIAHSDPTNENKCIQLRDYFDYRKHICIVTDLFGWSVFDFLKNNNYIPFPLKHIQMLSQQLFKSVAFLHSLGLVHTDLKPENVLLVSNASRTIRLPYRNYSQKVLNSCEIRLIDFGSATFEDEYHSSVVSTRHYRAPEIILGLGWSYPCDVWSIGCILVELFTGQALFQTHEDSEHLCMMEKILGPFDRNMISRSSRTSQRFFKSDGKVRYPLSNTPKKSINYLQSLQTLEQIFAVSSPEVALLLDLLKKVFVYDPKRRITAKEALWHPFFTQPISSNL.

The disordered stretch occupies residues 39 to 70 (PNLPPPFSVHQLQSFVPPQPPSSSSPSTTGTV). The region spanning 362-682 (YTVVRLLGHG…AKEALWHPFF (321 aa)) is the Protein kinase domain. Residues 368–376 (LGHGTFGKV) and Lys391 contribute to the ATP site. Asp488 serves as the catalytic Proton acceptor.

Belongs to the protein kinase superfamily. CMGC Ser/Thr protein kinase family. Lammer subfamily. Autophosphorylates on all three types of residues.

The catalysed reaction is L-seryl-[protein] + ATP = O-phospho-L-seryl-[protein] + ADP + H(+). It catalyses the reaction L-threonyl-[protein] + ATP = O-phospho-L-threonyl-[protein] + ADP + H(+). It carries out the reaction L-tyrosyl-[protein] + ATP = O-phospho-L-tyrosyl-[protein] + ADP + H(+). Functionally, protein kinase that may act as a negative regulator of filamentous growth and flocculation. Appears to have a role in normal cell wall and septum formation and in cell separation. May have antagonistic function in the regulation of beta-glucan distribution between the sites for cell wall and septum assembly. This Schizosaccharomyces pombe (strain 972 / ATCC 24843) (Fission yeast) protein is Dual specificity protein kinase lkh1 (lkh1).